Consider the following 216-residue polypeptide: DegV domain-containing protein UU190 (216 aa).

Positions 1–215 (MLWKNLDELF…LNNFAILIEA (215 aa)) constitute a DegV domain. Serine 26 is a binding site for hexadecanoate.

May bind long-chain fatty acids, such as palmitate, and may play a role in lipid transport or fatty acid metabolism. In Ureaplasma parvum serovar 3 (strain ATCC 700970), this protein is DegV domain-containing protein UU190.